A 78-amino-acid polypeptide reads, in one-letter code: Large ribosomal subunit protein bL28 (78 aa).

Positions 1-23 are disordered; the sequence is MSRKCQITGKKANNAMAVSHSHR.

This sequence belongs to the bacterial ribosomal protein bL28 family.

This chain is Large ribosomal subunit protein bL28, found in Picosynechococcus sp. (strain ATCC 27264 / PCC 7002 / PR-6) (Agmenellum quadruplicatum).